Consider the following 189-residue polypeptide: Protein GrpE (189 aa).

The interval 1–22 is disordered; the sequence is MKEQQKETEQNIEEINDETVTE. The span at 10 to 22 shows a compositional bias: acidic residues; it reads QNIEEINDETVTE.

The protein belongs to the GrpE family. In terms of assembly, homodimer.

It localises to the cytoplasm. Participates actively in the response to hyperosmotic and heat shock by preventing the aggregation of stress-denatured proteins, in association with DnaK and GrpE. It is the nucleotide exchange factor for DnaK and may function as a thermosensor. Unfolded proteins bind initially to DnaJ; upon interaction with the DnaJ-bound protein, DnaK hydrolyzes its bound ATP, resulting in the formation of a stable complex. GrpE releases ADP from DnaK; ATP binding to DnaK triggers the release of the substrate protein, thus completing the reaction cycle. Several rounds of ATP-dependent interactions between DnaJ, DnaK and GrpE are required for fully efficient folding. The chain is Protein GrpE from Leuconostoc citreum (strain KM20).